The primary structure comprises 405 residues: S-adenosylmethionine synthase (405 aa).

141-146 contributes to the ATP binding site; sequence GQGSVD.

The protein belongs to the AdoMet synthase 2 family. Requires Mg(2+) as cofactor.

It carries out the reaction L-methionine + ATP + H2O = S-adenosyl-L-methionine + phosphate + diphosphate. The protein operates within amino-acid biosynthesis; S-adenosyl-L-methionine biosynthesis; S-adenosyl-L-methionine from L-methionine: step 1/1. Catalyzes the formation of S-adenosylmethionine from methionine and ATP. The chain is S-adenosylmethionine synthase from Methanococcus maripaludis (strain C6 / ATCC BAA-1332).